A 52-amino-acid polypeptide reads, in one-letter code: Phospholamban (52 aa).

N-acetylmethionine is present on M1. At 1-31 (MEKVQYLTRSAIRRASTIEMPQQARQNLQNL) the chain is on the cytoplasmic side. Position 16 is a phosphoserine; by PKA (S16). T17 carries the post-translational modification Phosphothreonine; by CaMK2. The helical transmembrane segment at 32–52 (FINFCLILICLLLICIIVMLL) threads the bilayer. A lipid anchor (S-palmitoyl cysteine) is attached at C36.

Belongs to the phospholamban family. In terms of assembly, homopentamer. Can also form heterooligomers with other sarcoplasmic/endoplasmic reticulum calcium ATPase (SERCA) regulators ARLN, ERLN, SLN and STRIT1/DWORF. Monomer. Interacts with HAX1. Interacts as a monomer with ATP2A2; the interaction decreases ATP2A2 Ca(2+) affinity. Interacts with VMP1; VMP1 competes with PLN and SLN to prevent them from forming an inhibitory complex with ATP2A2. Interacts with S100A1 in a Ca(2+)-dependent manner. Post-translationally, phosphorylated at Thr-17 by CaMK2, and in response to beta-adrenergic stimulation. Phosphorylation by DMPK may stimulate sarcoplasmic reticulum calcium uptake in cardiomyocytes. Phosphorylation by PKA abolishes the inhibition of ATP2A2-mediated calcium uptake. In terms of processing, palmitoylated by ZDHHC16, promoting formation of the homopentamer. In elongated spermatids, proteolytically cleaved by SPPL2C which modulates intracellular Ca(2+) homeostasis. In terms of tissue distribution, expressed in testis (at protein level). In brain, expressed specifically in GABAergic GAD67+ neurons of the thalamic reticular nucleus where it colocalizes with ATP2A2/SERCA2 (at protein level). Expressed in the bladder and in the atria and ventricles of the heart.

The protein resides in the endoplasmic reticulum membrane. Its subcellular location is the sarcoplasmic reticulum membrane. It localises to the mitochondrion membrane. The protein localises to the membrane. In terms of biological role, reversibly inhibits the activity of ATP2A2/SERCA2 in cardiac sarcoplasmic reticulum by decreasing the apparent affinity of the ATPase for Ca(2+). Binds preferentially to the ATP-bound E1 conformational form of ATP2A2 which predominates at low Ca(2+) concentrations during the diastolic phase of the cardiac cycle. Inhibits ATP2A2 Ca(2+) affinity by disrupting its allosteric activation by ATP. Modulates the contractility of the heart muscle in response to physiological stimuli via its effects on ATP2A2. Modulates calcium re-uptake during muscle relaxation and plays an important role in calcium homeostasis in the heart muscle. The degree of ATP2A2 inhibition depends on the oligomeric state of PLN. ATP2A2 inhibition is alleviated by PLN phosphorylation. Also inhibits the activity of ATP2A3/SERCA3. Controls intracellular Ca(2+) levels in elongated spermatids and may play a role in germ cell differentiation. In the thalamic reticular nucleus of the brain, plays a role in the regulation of sleep patterns and executive functioning. In Mus musculus (Mouse), this protein is Phospholamban.